The chain runs to 199 residues: Desiccation stress protein DSP-22, chloroplastic (199 aa).

The transit peptide at 1-52 (MASSTCYATIPAMSCRGQSTITRFGPNNLFLGKQSYELPLMRRNAKFTVRSM) directs the protein to the chloroplast. Basic and acidic residues predominate over residues 53 to 62 (REDNEKEEQQ). Residues 53 to 82 (REDNEKEEQQQQKQQQTHDGGPDLTPNRTE) are disordered. The next 2 helical transmembrane spans lie at 130-152 (FNGG…LIPI) and 172-191 (IWNG…TEYV).

Belongs to the ELIP/psbS family. As to expression, preferentially localized in the chloroplast-rich palisade parenchyma cells, in extracts of desiccated leaves, in seeds, but not in roots or untreated leaves.

It localises to the plastid. The protein resides in the chloroplast thylakoid membrane. Possibly exerts a protective role during water loss. This chain is Desiccation stress protein DSP-22, chloroplastic (DSP-22), found in Craterostigma plantagineum (Blue gem).